The following is a 214-amino-acid chain: MSDFRQDFIRFALDKQVLKFGEFITKAGRKSPYFFNAGLFNDGLSTLNLSRFYAKSIQQSGIQFDMLFGPAYKGIILAAAAGMALAEQGRNVPFAYNRKEAKDHGEGGTLVGAPLKGKVLIIDDVISAGTSVRESVELIRAAGAEPAGVAIALDRMERGQGELSAVQEVAQQHGLPVVAIATLKDLLGFLENSPELAAHLDAVRAYRAQYGVDD.

K26 lines the 5-phospho-alpha-D-ribose 1-diphosphate pocket. 34 to 35 serves as a coordination point for orotate; sequence FF. Residues 72–73, R98, K99, K102, H104, and 123–131 each bind 5-phospho-alpha-D-ribose 1-diphosphate; these read YK and DDVISAGTS. Residues S127 and R155 each coordinate orotate.

It belongs to the purine/pyrimidine phosphoribosyltransferase family. PyrE subfamily. As to quaternary structure, homodimer. The cofactor is Mg(2+).

The enzyme catalyses orotidine 5'-phosphate + diphosphate = orotate + 5-phospho-alpha-D-ribose 1-diphosphate. Its pathway is pyrimidine metabolism; UMP biosynthesis via de novo pathway; UMP from orotate: step 1/2. Functionally, catalyzes the transfer of a ribosyl phosphate group from 5-phosphoribose 1-diphosphate to orotate, leading to the formation of orotidine monophosphate (OMP). In Chromobacterium violaceum (strain ATCC 12472 / DSM 30191 / JCM 1249 / CCUG 213 / NBRC 12614 / NCIMB 9131 / NCTC 9757 / MK), this protein is Orotate phosphoribosyltransferase.